The primary structure comprises 362 residues: 3-isopropylmalate dehydrogenase (362 aa).

78-91 serves as a coordination point for NAD(+); it reads GPKWETLPPDEQPE. Residues arginine 99, arginine 109, arginine 138, and aspartate 227 each coordinate substrate. Residues aspartate 227, aspartate 251, and aspartate 255 each contribute to the Mg(2+) site. 285 to 297 is an NAD(+) binding site; the sequence is GSAPDIAGQGIAN.

This sequence belongs to the isocitrate and isopropylmalate dehydrogenases family. LeuB type 1 subfamily. In terms of assembly, homodimer. Mg(2+) is required as a cofactor. The cofactor is Mn(2+).

The protein resides in the cytoplasm. The enzyme catalyses (2R,3S)-3-isopropylmalate + NAD(+) = 4-methyl-2-oxopentanoate + CO2 + NADH. Its pathway is amino-acid biosynthesis; L-leucine biosynthesis; L-leucine from 3-methyl-2-oxobutanoate: step 3/4. Its function is as follows. Catalyzes the oxidation of 3-carboxy-2-hydroxy-4-methylpentanoate (3-isopropylmalate) to 3-carboxy-4-methyl-2-oxopentanoate. The product decarboxylates to 4-methyl-2 oxopentanoate. The protein is 3-isopropylmalate dehydrogenase of Geobacter metallireducens (strain ATCC 53774 / DSM 7210 / GS-15).